The primary structure comprises 190 residues: Adenine phosphoribosyltransferase (190 aa).

This sequence belongs to the purine/pyrimidine phosphoribosyltransferase family. As to quaternary structure, homodimer.

Its subcellular location is the cytoplasm. It catalyses the reaction AMP + diphosphate = 5-phospho-alpha-D-ribose 1-diphosphate + adenine. Its pathway is purine metabolism; AMP biosynthesis via salvage pathway; AMP from adenine: step 1/1. Catalyzes a salvage reaction resulting in the formation of AMP, that is energically less costly than de novo synthesis. This chain is Adenine phosphoribosyltransferase, found in Treponema denticola (strain ATCC 35405 / DSM 14222 / CIP 103919 / JCM 8153 / KCTC 15104).